Consider the following 240-residue polypeptide: UDP-2,3-diacylglucosamine hydrolase (240 aa).

Mn(2+)-binding residues include Asp8, His10, Asp41, Asn79, and His114. 79–80 (NR) is a binding site for substrate. Substrate-binding residues include Asp122, Ser160, Thr164, Lys167, and His195. Mn(2+) contacts are provided by His195 and His197.

It belongs to the LpxH family. It depends on Mn(2+) as a cofactor.

It localises to the cell inner membrane. The enzyme catalyses UDP-2-N,3-O-bis[(3R)-3-hydroxytetradecanoyl]-alpha-D-glucosamine + H2O = 2-N,3-O-bis[(3R)-3-hydroxytetradecanoyl]-alpha-D-glucosaminyl 1-phosphate + UMP + 2 H(+). It participates in glycolipid biosynthesis; lipid IV(A) biosynthesis; lipid IV(A) from (3R)-3-hydroxytetradecanoyl-[acyl-carrier-protein] and UDP-N-acetyl-alpha-D-glucosamine: step 4/6. Functionally, hydrolyzes the pyrophosphate bond of UDP-2,3-diacylglucosamine to yield 2,3-diacylglucosamine 1-phosphate (lipid X) and UMP by catalyzing the attack of water at the alpha-P atom. Involved in the biosynthesis of lipid A, a phosphorylated glycolipid that anchors the lipopolysaccharide to the outer membrane of the cell. This Pseudomonas aeruginosa (strain UCBPP-PA14) protein is UDP-2,3-diacylglucosamine hydrolase.